Reading from the N-terminus, the 266-residue chain is MKGILGRKVGMTQIFSDNGIVIPVTLIEVKPNIVSNVLTDEKNGYKAIQLSLEDKKKSRQRKPEIGHFAKANTTPKRFVKEIRDMQGFELGSNVDVSIFTPGEFVDVTGISKGKGFAGTIKRHNQKIGPKSHGGGGGSKPVRQTGSLGDISGNKVVKGMTMPGHLGHEQVTIQNLEVIMTDVKNNILLVKGAVPGPKKGFVVIKECAKKIPSKEAVKLVDLEIVAKKNHLFEISKKYNINLKNDMSIEEMESLIEKAKEEQEGKGE.

Residues 124–149 are disordered; it reads NQKIGPKSHGGGGGSKPVRQTGSLGD.

The protein belongs to the universal ribosomal protein uL3 family. As to quaternary structure, part of the 50S ribosomal subunit. Forms a cluster with proteins L14 and L19.

Functionally, one of the primary rRNA binding proteins, it binds directly near the 3'-end of the 23S rRNA, where it nucleates assembly of the 50S subunit. This is Large ribosomal subunit protein uL3 from Mycoplasmopsis pulmonis (strain UAB CTIP) (Mycoplasma pulmonis).